The sequence spans 649 residues: Transcription factor E2-alpha (649 aa).

5 disordered regions span residues Gly-34 to Ser-107, Leu-127 to Thr-206, Leu-222 to Gln-267, Ser-291 to Gly-325, and Asp-339 to Leu-382. Polar residues-rich tracts occupy residues Ser-56 to Tyr-76 and Ser-85 to Phe-94. A compositionally biased stretch (low complexity) spans Leu-127–Gly-143. Residues Ser-135 and Ser-140 each carry the phosphoserine modification. Positions Lys-145 to Ser-156 are enriched in polar residues. The Nuclear localization signal signature appears at Ser-171–Val-177. Composition is skewed to low complexity over residues Pro-182–Ser-193 and Gly-242–Ser-259. Low complexity predominate over residues Asp-339 to Pro-352. Thr-351 is subject to Phosphothreonine. The residue at position 355 (Ser-355) is a Phosphoserine. Omega-N-methylarginine is present on Arg-367. Position 375 is a phosphoserine (Ser-375). The leucine-zipper stretch occupies residues Leu-385–Leu-420. Residues Gly-431–Val-547 are disordered. Residues Thr-448–Asp-469 are compositionally biased toward polar residues. Lys-494 is covalently cross-linked (Glycyl lysine isopeptide (Lys-Gly) (interchain with G-Cter in SUMO2)). Ser-524 carries the phosphoserine modification. Glu-529 is subject to Phosphothreonine. Over residues Gln-537–Val-547 the composition is skewed to basic and acidic residues. Positions Glu-544 to Leu-597 constitute a bHLH domain. Residue Lys-620 forms a Glycyl lysine isopeptide (Lys-Gly) (interchain with G-Cter in SUMO2) linkage.

As to quaternary structure, homodimer. Heterodimer; efficient DNA binding requires dimerization with another bHLH protein. Forms a heterodimer with TWIST1 and TWIST2. Forms a heterodimer with NEUROD1; the heterodimer is inhibited in presence of ID2, but not NR0B2, to E-box element. Forms a heterodimer with TCF15; the heterodimer binds E-box element. Forms a heterodimer with MYOG; heterodimerization enhances MYOG DNA-binding and transcriptional activities. Forms a heterodimer with ATOH8; repress transcription of TCF3 and TCF3-NEUROG3 dimer-induced transactivation of E box-dependent promoters. Component of a nuclear TAL-1 complex composed at least of CBFA2T3, LDB1, TAL1 and TCF3. Interacts with NEUROD2. Interacts with EP300. Interacts with PTF1A, TGFB1I1 and UBE2I. Interacts with BHLHA9. Interacts with ASB2; the interaction is mediated by SKP2 and targets TCF3 for Notch-induced proteasomal degradation. Interacts with transcription factor ASCL5/AmeloD. In terms of assembly, interacts with RALGAPA1. Interacts with FIGLA. Forms a heterodimer with ATOH7; required for ATOH7 DNA-binding. In terms of processing, phosphorylated following NGF stimulation. Undergoes Notch-induced ubiquitination and subsequent proteasomal degradation which is mediated by ASB1 or ASB2, the substrate-recognition components of probable ECS E3 ubiquitin-protein ligase complexes.

It localises to the nucleus. Functionally, transcriptional regulator. Involved in the initiation of neuronal differentiation and mesenchymal to epithelial transition. Heterodimers between TCF3 and tissue-specific basic helix-loop-helix (bHLH) proteins play major roles in determining tissue-specific cell fate during embryogenesis, like muscle or early B-cell differentiation. Together with TCF15, required for the mesenchymal to epithelial transition. Dimers bind DNA on E-box motifs: 5'-CANNTG-3'. Binds to the kappa-E2 site in the kappa immunoglobulin gene enhancer. Binds to IEB1 and IEB2, which are short DNA sequences in the insulin gene transcription control region. Facilitates ATOH7 binding to DNA at the consensus sequence 5'-CAGGTG-3', and positively regulates transcriptional activity. In Mesocricetus auratus (Golden hamster), this protein is Transcription factor E2-alpha (TCF3).